A 372-amino-acid chain; its full sequence is Delta-type opioid receptor (372 aa).

Residues 1–47 are Extracellular-facing; the sequence is MEPVPSARAELQFSLLANVSDTFPSAFPSASANASGSPGARSASSLA. Asparagine 18 and asparagine 33 each carry an N-linked (GlcNAc...) asparagine glycan. Residues 48–75 form a helical membrane-spanning segment; the sequence is LAIAITALYSAVCAVGLLGNVLVMFGIV. The Cytoplasmic segment spans residues 76 to 85; that stretch reads RYTKLKTATN. A helical membrane pass occupies residues 86–110; it reads IYIFNLALADALATSTLPFQSAKYL. The Extracellular portion of the chain corresponds to 111 to 122; the sequence is METWPFGELLCK. Cysteine 121 and cysteine 198 are disulfide-bonded. A helical membrane pass occupies residues 123–144; the sequence is AVLSIDYYNMFTSIFTLTMMSV. The Cytoplasmic portion of the chain corresponds to 145–163; that stretch reads DRYIAVCHPVKALDFRTPA. A helical transmembrane segment spans residues 164–186; the sequence is KAKLINICIWVLASGVGVPIMVM. At 187-206 the chain is on the extracellular side; that stretch reads AVTQPRDGAVVCTLQFPSPS. A helical transmembrane segment spans residues 207-238; sequence WYWDTVTKICVFLFAFVVPILIITVCYGLMLL. Topologically, residues 239–261 are cytoplasmic; the sequence is RLRSVRLLSGSKEKDRSLRRITR. A helical membrane pass occupies residues 262-284; it reads MVLVVVGAFVVCWAPIHIFVIVW. Topologically, residues 285-299 are extracellular; the sequence is TLVDINRRDPLVVAA. A helical membrane pass occupies residues 300–321; the sequence is LHLCIALGYANSSLNPVLYAFL. Over 322–372 the chain is Cytoplasmic; the sequence is DENFKRCFRQLCRAPCGGQEPGSLRRPRQATARERVTACTPSDGPGGGAAA. Cysteine 333 is lipidated: S-palmitoyl cysteine. Residues 340 to 372 are disordered; the sequence is QEPGSLRRPRQATARERVTACTPSDGPGGGAAA.

This sequence belongs to the G-protein coupled receptor 1 family. May form homooligomers. Forms a heterodimer with OPRM1. Interacts with GPRASP1. Interacts with RTP4; the interaction promotes cell surface localization of the OPRD1-OPRM1 heterodimer. Post-translationally, ubiquitinated. A basal ubiquitination seems not to be related to degradation. Ubiquitination is increased upon formation of OPRM1:OPRD1 oligomers leading to proteasomal degradation; the ubiquitination is diminished by RTP4. Detected in brain, brain stem and brain cortex.

The protein localises to the cell membrane. In terms of biological role, G-protein coupled receptor that functions as a receptor for endogenous enkephalins and for a subset of other opioids. Ligand binding causes a conformation change that triggers signaling via guanine nucleotide-binding proteins (G proteins) and modulates the activity of down-stream effectors, such as adenylate cyclase. Signaling leads to the inhibition of adenylate cyclase activity. Inhibits neurotransmitter release by reducing calcium ion currents and increasing potassium ion conductance. Plays a role in the perception of pain and in opiate-mediated analgesia. Plays a role in developing analgesic tolerance to morphine. This is Delta-type opioid receptor (Oprd1) from Rattus norvegicus (Rat).